Consider the following 164-residue polypeptide: Two-component response regulator ARR16 (164 aa).

One can recognise a Response regulatory domain in the interval 30 to 160 (HVLAVDDNLI…DVEKLKCHLM (131 aa)). A 4-aspartylphosphate modification is found at D93.

It belongs to the ARR family. Type-A subfamily. Post-translationally, two-component system major event consists of a His-to-Asp phosphorelay between a sensor histidine kinase (HK) and a response regulator (RR). In plants, the His-to-Asp phosphorelay involves an additional intermediate named Histidine-containing phosphotransfer protein (HPt). This multistep phosphorelay consists of a His-Asp-His-Asp sequential transfer of a phosphate group between first a His and an Asp of the HK protein, followed by the transfer to a conserved His of the HPt protein and finally the transfer to an Asp in the receiver domain of the RR protein.

The protein resides in the nucleus. In terms of biological role, functions as a response regulator involved in His-to-Asp phosphorelay signal transduction system. Phosphorylation of the Asp residue in the receiver domain activates the ability of the protein to promote the transcription of target genes. Type-A response regulators seem to act as negative regulators of the cytokinin signaling. This Arabidopsis thaliana (Mouse-ear cress) protein is Two-component response regulator ARR16 (ARR16).